The primary structure comprises 382 residues: Inactive anthranilate O-methyltransferase 1 (382 aa).

Positions 20, 61, 66, 102, 103, 146, and 147 each coordinate S-adenosyl-L-homocysteine. Mg(2+)-binding residues include E268 and F270.

The protein belongs to the methyltransferase superfamily. Type-7 methyltransferase family. SABATH subfamily.

This is Inactive anthranilate O-methyltransferase 1 (AAMT1I) from Zea mays (Maize).